Consider the following 521-residue polypeptide: MARVVPAWLLLPLAVWVVLPTWLSSAKFSSLIERISDPKDLKKLLRTRNNVLVLYSKSEAAAESHLKLLSTVAQAVKGQGTICWVDCGDAESRKLCKKMKVDLSAKDKKVELFHYQDGAFHTEYNRAVTFKSIVAFLKDPKGPPLWEEDPGAKDVVHIDNEKDFRRLLKKEEKPILMMFYAPWCSVCKRIMPHFQKAATQLRGQFVLAGMNVYPSEFENIKEEYSVRGYPTICYFEKGRFLFQYDSYGSTAEDIVEWLKNPQPPQPQVPETPWADEGGSVYHLSDEDFDQFVKEHSSVLVMFHAPWCGHCKKMKPEFESAAEVLHGEGDSSGVLAAVDATVNKALAERFHIAEFPTLKYFKNGEKYAVPALRTKKSFIEWMRNPESPPPPDPAWEEQQTSVLHLSGDNFRETLKRKKHALVMFYAPWCPHCKKAIPHFTAAADAFKDDRKIACAAIDCVKENNKDLCQQEAVKAYPTFHYYHYGKFVEKYDTNPTELGFTSFIRTLREGDHERLGKKKEEL.

A signal peptide spans methionine 1 to serine 25. 3 consecutive Thioredoxin domains span residues phenylalanine 136–proline 263, alanine 274–serine 386, and proline 387–glutamate 508. Cystine bridges form between cysteine 184–cysteine 187, cysteine 307–cysteine 310, and cysteine 428–cysteine 431. The short motif at lysine 518–leucine 521 is the Prevents secretion from ER element.

The protein belongs to the protein disulfide isomerase family.

The protein localises to the endoplasmic reticulum lumen. The catalysed reaction is Catalyzes the rearrangement of -S-S- bonds in proteins.. The protein is Protein disulfide-isomerase A5 (PDIA5) of Bos taurus (Bovine).